The chain runs to 430 residues: Enolase (430 aa).

Glutamine 167 lines the (2R)-2-phosphoglycerate pocket. Residue glutamate 209 is the Proton donor of the active site. 3 residues coordinate Mg(2+): aspartate 245, glutamate 286, and aspartate 313. The (2R)-2-phosphoglycerate site is built by lysine 338, arginine 367, serine 368, and lysine 389. Residue lysine 338 is the Proton acceptor of the active site.

This sequence belongs to the enolase family. Requires Mg(2+) as cofactor.

The protein resides in the cytoplasm. It is found in the secreted. It localises to the cell surface. The enzyme catalyses (2R)-2-phosphoglycerate = phosphoenolpyruvate + H2O. It functions in the pathway carbohydrate degradation; glycolysis; pyruvate from D-glyceraldehyde 3-phosphate: step 4/5. Its function is as follows. Catalyzes the reversible conversion of 2-phosphoglycerate (2-PG) into phosphoenolpyruvate (PEP). It is essential for the degradation of carbohydrates via glycolysis. The chain is Enolase from Synechococcus sp. (strain CC9311).